We begin with the raw amino-acid sequence, 136 residues long: Small ribosomal subunit protein uS19 (136 aa).

A disordered region spans residues 117–136 (VQHGDPGMGATRSSMFVPLK).

Belongs to the universal ribosomal protein uS19 family.

In terms of biological role, protein S19 forms a complex with S13 that binds strongly to the 16S ribosomal RNA. The protein is Small ribosomal subunit protein uS19 of Methanobrevibacter smithii (strain ATCC 35061 / DSM 861 / OCM 144 / PS).